We begin with the raw amino-acid sequence, 652 residues long: UvrABC system protein C (652 aa).

The GIY-YIG domain occupies 19-96 (KTSGVYLWKD…IKKHKPRYNI (78 aa)). One can recognise a UVR domain in the interval 203–238 (EDVSGTLKEKMKEAAEKKEFEKAARLRDGIQAVYAL).

This sequence belongs to the UvrC family. Interacts with UvrB in an incision complex.

The protein localises to the cytoplasm. Functionally, the UvrABC repair system catalyzes the recognition and processing of DNA lesions. UvrC both incises the 5' and 3' sides of the lesion. The N-terminal half is responsible for the 3' incision and the C-terminal half is responsible for the 5' incision. This is UvrABC system protein C from Treponema denticola (strain ATCC 35405 / DSM 14222 / CIP 103919 / JCM 8153 / KCTC 15104).